Consider the following 214-residue polypeptide: MSTKLQDHFEKITKILSGFGVEGCISYGEITFSIRDQRDIHLILKKLKKEYLFEQLTDVTAVDYLTYGQSDWQVGKVVSQTGFSRGRQQDFKTAAVDNRFEIIYQLLSMANNVRIRVKCKLKDAQIILVDSVSDLWPSANWAEREVYDMFGIYFNNHPDLRRVLTDYGFVGHPLRKDFPQTGYVEMRYDENLGRVVYEPVEIDDRVNTPRVIRN.

This sequence belongs to the complex I 30 kDa subunit family. NDH-1 is composed of 14 different subunits. Subunits NuoB, C, D, E, F, and G constitute the peripheral sector of the complex.

The protein localises to the cell inner membrane. The catalysed reaction is a quinone + NADH + 5 H(+)(in) = a quinol + NAD(+) + 4 H(+)(out). Its function is as follows. NDH-1 shuttles electrons from NADH, via FMN and iron-sulfur (Fe-S) centers, to quinones in the respiratory chain. The immediate electron acceptor for the enzyme in this species is believed to be ubiquinone. Couples the redox reaction to proton translocation (for every two electrons transferred, four hydrogen ions are translocated across the cytoplasmic membrane), and thus conserves the redox energy in a proton gradient. This is NADH-quinone oxidoreductase subunit C from Francisella tularensis subsp. holarctica (strain LVS).